A 279-amino-acid chain; its full sequence is Phosphatidylglycerol--prolipoprotein diacylglyceryl transferase (279 aa).

Helical transmembrane passes span 4–24 (IGPL…FLGY), 44–64 (VVFW…VLTS), 76–96 (LYIW…GLTF), and 104–124 (GYPL…GIVA). Arg126 provides a ligand contact to a 1,2-diacyl-sn-glycero-3-phospho-(1'-sn-glycerol). Helical transmembrane passes span 182 to 202 (LTQV…LYWL), 206 to 226 (PFYG…RSVL), and 245 to 265 (LGIG…LLSL).

This sequence belongs to the Lgt family.

The protein localises to the cell inner membrane. The catalysed reaction is L-cysteinyl-[prolipoprotein] + a 1,2-diacyl-sn-glycero-3-phospho-(1'-sn-glycerol) = an S-1,2-diacyl-sn-glyceryl-L-cysteinyl-[prolipoprotein] + sn-glycerol 1-phosphate + H(+). It functions in the pathway protein modification; lipoprotein biosynthesis (diacylglyceryl transfer). Functionally, catalyzes the transfer of the diacylglyceryl group from phosphatidylglycerol to the sulfhydryl group of the N-terminal cysteine of a prolipoprotein, the first step in the formation of mature lipoproteins. This Thermus thermophilus (strain ATCC 27634 / DSM 579 / HB8) protein is Phosphatidylglycerol--prolipoprotein diacylglyceryl transferase.